Here is a 392-residue protein sequence, read N- to C-terminus: Dihydroorotate dehydrogenase (quinone) (392 aa).

Residues 90-94 (AGFDK) and threonine 114 contribute to the FMN site. A substrate-binding site is contributed by lysine 94. Residue 139-143 (NRMGF) participates in substrate binding. The FMN site is built by asparagine 173 and asparagine 206. Residue asparagine 206 participates in substrate binding. Serine 209 (nucleophile) is an active-site residue. Residue asparagine 211 coordinates substrate. 2 residues coordinate FMN: lysine 243 and valine 271. Position 272 to 273 (272 to 273 (NT)) interacts with substrate. FMN contacts are provided by residues glycine 301, glycine 330, and 351–352 (YT).

The protein belongs to the dihydroorotate dehydrogenase family. Type 2 subfamily. Monomer. It depends on FMN as a cofactor.

It is found in the cell membrane. The enzyme catalyses (S)-dihydroorotate + a quinone = orotate + a quinol. The protein operates within pyrimidine metabolism; UMP biosynthesis via de novo pathway; orotate from (S)-dihydroorotate (quinone route): step 1/1. In terms of biological role, catalyzes the conversion of dihydroorotate to orotate with quinone as electron acceptor. This Prochlorococcus marinus (strain MIT 9313) protein is Dihydroorotate dehydrogenase (quinone).